A 319-amino-acid chain; its full sequence is Beta-ketoacyl-[acyl-carrier-protein] synthase III (319 aa).

Residues Cys113 and His246 contribute to the active site. The ACP-binding stretch occupies residues 247–251 (QANIR). Residue Asn276 is part of the active site.

Belongs to the thiolase-like superfamily. FabH family. As to quaternary structure, homodimer.

It localises to the cytoplasm. It carries out the reaction malonyl-[ACP] + acetyl-CoA + H(+) = 3-oxobutanoyl-[ACP] + CO2 + CoA. Its pathway is lipid metabolism; fatty acid biosynthesis. Catalyzes the condensation reaction of fatty acid synthesis by the addition to an acyl acceptor of two carbons from malonyl-ACP. Catalyzes the first condensation reaction which initiates fatty acid synthesis and may therefore play a role in governing the total rate of fatty acid production. Possesses both acetoacetyl-ACP synthase and acetyl transacylase activities. Its substrate specificity determines the biosynthesis of branched-chain and/or straight-chain of fatty acids. In Ehrlichia ruminantium (strain Welgevonden), this protein is Beta-ketoacyl-[acyl-carrier-protein] synthase III.